The primary structure comprises 500 residues: Abscisic acid 8'-hydroxylase 3 (500 aa).

A helical transmembrane segment spans residues 3 to 23 (ASFVIVIVISFFISLAFMCYV). Residue C426 participates in heme binding.

Belongs to the cytochrome P450 family. Heme serves as cofactor.

It localises to the membrane. The enzyme catalyses 2-cis-(+)-abscisate + reduced [NADPH--hemoprotein reductase] + O2 = (+)-8'-hydroxyabscisate + oxidized [NADPH--hemoprotein reductase] + H2O + H(+). It participates in plant hormone degradation; abscisic acid degradation. Functionally, involved in the oxidative degradation of abscisic acid. The protein is Abscisic acid 8'-hydroxylase 3 (CYP707A7) of Oryza sativa subsp. japonica (Rice).